The chain runs to 441 residues: Transforming protein p54/c-ets-1 (441 aa).

The 86-residue stretch at 51-136 (ATFSGFAKEQ…EHLEILQKEE (86 aa)) folds into the PNT domain. The tract at residues 130–243 (EILQKEEAKP…DNMCMGRASR (114 aa)) is activation domain; required for transcription activation. The helix HI-1 stretch occupies residues 304–312 (FKDYVRDRA). The segment at 323 to 330 (AAALAGYT) is helix HI-2. A DNA-binding region (ETS) is located at residues 335 to 415 (IQLWQFLLEL…AGKRYVYRFV (81 aa)). The segment at 418-422 (LQSLL) is helix H4. Residues 426-432 (PEELHAM) form a helix H5 region.

It belongs to the ETS family. As to quaternary structure, binds DNA as a homodimer; homodimerization is required for transcription activation.

It is found in the nucleus. The protein resides in the cytoplasm. With respect to regulation, autoinhibited by a module composed of four alpha helices (HI-1, HI-2, H4, and H5) that flank the DNA-binding ETS domain, reducing the affinity for DNA. Its function is as follows. Transcription factor. Directly controls the expression of cytokine and chemokine genes in a wide variety of different cellular contexts. This is Transforming protein p54/c-ets-1 (ETS1) from Gallus gallus (Chicken).